A 320-amino-acid polypeptide reads, in one-letter code: Cytochrome f (320 aa).

The signal sequence occupies residues 1–35 (MQTRNTFSWIREEITRSISVSLMIYIITWASISSA). Heme-binding residues include tyrosine 36, cysteine 56, cysteine 59, and histidine 60. The chain crosses the membrane as a helical span at residues 286–306 (VQGLLFFLGSVVLAQIFLVLK).

It belongs to the cytochrome f family. The 4 large subunits of the cytochrome b6-f complex are cytochrome b6, subunit IV (17 kDa polypeptide, petD), cytochrome f and the Rieske protein, while the 4 small subunits are PetG, PetL, PetM and PetN. The complex functions as a dimer. Heme is required as a cofactor.

The protein localises to the plastid. The protein resides in the chloroplast thylakoid membrane. Component of the cytochrome b6-f complex, which mediates electron transfer between photosystem II (PSII) and photosystem I (PSI), cyclic electron flow around PSI, and state transitions. The chain is Cytochrome f from Nasturtium officinale (Watercress).